Reading from the N-terminus, the 657-residue chain is tRNA 5-methylaminomethyl-2-thiouridine biosynthesis bifunctional protein MnmC (657 aa).

The tRNA (mnm(5)s(2)U34)-methyltransferase stretch occupies residues Met1–Ala236. Residues Ile261–Asp657 form an FAD-dependent cmnm(5)s(2)U34 oxidoreductase region.

It in the N-terminal section; belongs to the methyltransferase superfamily. tRNA (mnm(5)s(2)U34)-methyltransferase family. The protein in the C-terminal section; belongs to the DAO family. FAD serves as cofactor.

It is found in the cytoplasm. The enzyme catalyses 5-aminomethyl-2-thiouridine(34) in tRNA + S-adenosyl-L-methionine = 5-methylaminomethyl-2-thiouridine(34) in tRNA + S-adenosyl-L-homocysteine + H(+). Its function is as follows. Catalyzes the last two steps in the biosynthesis of 5-methylaminomethyl-2-thiouridine (mnm(5)s(2)U) at the wobble position (U34) in tRNA. Catalyzes the FAD-dependent demodification of cmnm(5)s(2)U34 to nm(5)s(2)U34, followed by the transfer of a methyl group from S-adenosyl-L-methionine to nm(5)s(2)U34, to form mnm(5)s(2)U34. The sequence is that of tRNA 5-methylaminomethyl-2-thiouridine biosynthesis bifunctional protein MnmC from Burkholderia multivorans (strain ATCC 17616 / 249).